The sequence spans 197 residues: Probable molybdenum cofactor guanylyltransferase (197 aa).

GTP contacts are provided by residues 10 to 12 (LCG), Lys22, Asp73, and Asp102. A Mg(2+)-binding site is contributed by Asp102.

It belongs to the MobA family. It depends on Mg(2+) as a cofactor.

It localises to the cytoplasm. It carries out the reaction Mo-molybdopterin + GTP + H(+) = Mo-molybdopterin guanine dinucleotide + diphosphate. Functionally, transfers a GMP moiety from GTP to Mo-molybdopterin (Mo-MPT) cofactor (Moco or molybdenum cofactor) to form Mo-molybdopterin guanine dinucleotide (Mo-MGD) cofactor. In Methanothermobacter thermautotrophicus (strain ATCC 29096 / DSM 1053 / JCM 10044 / NBRC 100330 / Delta H) (Methanobacterium thermoautotrophicum), this protein is Probable molybdenum cofactor guanylyltransferase.